The following is an 871-amino-acid chain: Dual O-methyltransferase/FAD-dependent monooxygenase CTB3 (871 aa).

The interval 1 to 429 (MMQFQRDLEA…GLLTVRSAGQ (429 aa)) is O-methyltransferase. An S-adenosyl-L-methionine-binding site is contributed by D279. H331 (proton acceptor) is an active-site residue. An FAD-dependent monooxygenase region spans residues 430–871 (TALSGTNTLT…NLVDCSEFVF (442 aa)). The FAD site is built by E485, R569, and A806.

This sequence in the C-terminal section; belongs to the paxM FAD-dependent monooxygenase family. In the N-terminal section; belongs to the class I-like SAM-binding methyltransferase superfamily. Cation-independent O-methyltransferase family. COMT subfamily.

It catalyses the reaction nor-toralactone + S-adenosyl-L-methionine = toralactone + S-adenosyl-L-homocysteine + H(+). The enzyme catalyses toralactone + NADH + O2 + H(+) = 1-(3,4,5-trihydroxy-7-methoxynaphthalen-2-yl)propan-2-one + CO2 + NAD(+). It functions in the pathway mycotoxin biosynthesis. In terms of biological role, dual O-methyltransferase/FAD-dependent monooxygenase; part of the gene cluster that mediates the biosynthesis of cercosporin, a light-activated, non-host-selective toxin. The perylenequinone chromophore of cercosporin absorbs light energy to attain an electronically-activated triplet state and produces active oxygen species such as the hydroxyl radical, superoxide, hydrogen peroxide or singlet oxygen upon reaction with oxygen molecules. These reactive oxygen species cause damage to various cellular components including lipids, proteins and nucleic acids. The first step of cercosporin biosynthesis is performed by the polyketide synthase CTB1 which catalyzes the formation of nor-toralactone. The starter unit acyltransferase (SAT) domain of CTB1 initiates polyketide extension by the selective utilization of acetyl-CoA, which is elongated to the heptaketide in the beta-ketoacyl synthase (KS) domain by successive condensations with six malonyl units introduced by the malonyl acyltransferase (MAT) domain. The product template (PT) domain catalyzes C4-C9 and C2-C11 aldol cyclizations and dehydrations to a trihydroxynaphthalene, which is thought to be delivered to the thioesterase (TE) domain for product release. The bifunctional enzyme CTB3 then methylates nor-toralactone to toralactone before conducting an unusual oxidative aromatic ring opening. The O-methyltransferase CTB2 further methylates the nascent OH-6 of the CBT3 product, blocking further oxidation at this site before the reductase CTB6 reduces the 2-oxopropyl ketone at position C7, giving naphthalene. The FAD-dependent monooxygenase CTB5 in concert with the multicopper oxidase CTB12 are responsible for homodimerization of naphthalene with CTB7 installing the dioxepine moiety, finally producing cercosporin. The fasciclin domain-containing protein CTB11 might act with CTB5 and CTB12 whereas the roles of CTB9 and CTB10 have still to be elucidated. The polypeptide is Dual O-methyltransferase/FAD-dependent monooxygenase CTB3 (Cercospora nicotianae (Barn spot disease fungus)).